Here is a 436-residue protein sequence, read N- to C-terminus: Trigger factor (436 aa).

One can recognise a PPIase FKBP-type domain in the interval 161 to 246; sequence DDQLNIDFVG…VNSVAEPKLP (86 aa).

The protein belongs to the FKBP-type PPIase family. Tig subfamily.

Its subcellular location is the cytoplasm. It catalyses the reaction [protein]-peptidylproline (omega=180) = [protein]-peptidylproline (omega=0). In terms of biological role, involved in protein export. Acts as a chaperone by maintaining the newly synthesized protein in an open conformation. Functions as a peptidyl-prolyl cis-trans isomerase. This chain is Trigger factor, found in Pseudomonas aeruginosa (strain LESB58).